Here is a 572-residue protein sequence, read N- to C-terminus: Golgi apyrase (572 aa).

The Lumenal segment spans residues 1 to 470 (MVRKYGIFID…KHWMRLFPNK (470 aa)). Residue Glu145 is the Proton acceptor of the active site. A helical membrane pass occupies residues 471–491 (LFFILSFIFCLFFLFSLVLFG). Topologically, residues 492–572 (YDPKRRQRFK…RERTPRSPFP (81 aa)) are cytoplasmic.

Belongs to the GDA1/CD39 NTPase family. Ca(2+) serves as cofactor. It depends on Mg(2+) as a cofactor. Mn(2+) is required as a cofactor.

It is found in the golgi apparatus. The protein resides in the membrane. It carries out the reaction a ribonucleoside 5'-triphosphate + 2 H2O = a ribonucleoside 5'-phosphate + 2 phosphate + 2 H(+). It functions in the pathway protein modification; protein glycosylation. Functionally, catalyzes the hydrolysis of phosphoanhydride bonds of nucleoside tri- and di-phosphates. Required for Golgi glycosylation and cell wall integrity. Involved in N-mannosylation of proteins in Golgi. This is Golgi apyrase from Schizosaccharomyces pombe (strain 972 / ATCC 24843) (Fission yeast).